The chain runs to 336 residues: Phosphoribosylformylglycinamidine cyclo-ligase (336 aa).

The protein belongs to the AIR synthase family.

The protein localises to the cytoplasm. It carries out the reaction 2-formamido-N(1)-(5-O-phospho-beta-D-ribosyl)acetamidine + ATP = 5-amino-1-(5-phospho-beta-D-ribosyl)imidazole + ADP + phosphate + H(+). The protein operates within purine metabolism; IMP biosynthesis via de novo pathway; 5-amino-1-(5-phospho-D-ribosyl)imidazole from N(2)-formyl-N(1)-(5-phospho-D-ribosyl)glycinamide: step 2/2. The sequence is that of Phosphoribosylformylglycinamidine cyclo-ligase from Caldanaerobacter subterraneus subsp. tengcongensis (strain DSM 15242 / JCM 11007 / NBRC 100824 / MB4) (Thermoanaerobacter tengcongensis).